The following is a 180-amino-acid chain: Sperm protein associated with the nucleus on the X chromosome N2 (180 aa).

Disordered stretches follow at residues 1 to 46 and 64 to 180; these read MEQP…KTKT and NSNQ…GGED. A compositionally biased stretch (basic and acidic residues) spans 10–26; that stretch reads GEKRKSPCESNNKKNDE. The span at 82–169 shows a compositional bias: acidic residues; it reads QEEEDEGLDS…SSQEDEDLDS (88 aa). A compositionally biased stretch (low complexity) spans 170 to 180; it reads SEGSSQEGGED.

Belongs to the SPAN-X family.

The protein is Sperm protein associated with the nucleus on the X chromosome N2 (SPANXN2) of Homo sapiens (Human).